The primary structure comprises 473 residues: Adenosylhomocysteinase (473 aa).

Residues T60, D135, and E197 each coordinate substrate. 198-200 (TTT) contacts NAD(+). 2 residues coordinate substrate: K227 and D231. NAD(+) contacts are provided by residues N232, 261–266 (GFGDVG), E284, N319, 340–342 (IGH), and N385.

It belongs to the adenosylhomocysteinase family. It depends on NAD(+) as a cofactor.

It is found in the cytoplasm. It catalyses the reaction S-adenosyl-L-homocysteine + H2O = L-homocysteine + adenosine. The protein operates within amino-acid biosynthesis; L-homocysteine biosynthesis; L-homocysteine from S-adenosyl-L-homocysteine: step 1/1. Functionally, may play a key role in the regulation of the intracellular concentration of adenosylhomocysteine. The polypeptide is Adenosylhomocysteinase (Bradyrhizobium sp. (strain BTAi1 / ATCC BAA-1182)).